Reading from the N-terminus, the 117-residue chain is Non-specific lipid-transfer protein (117 aa).

Positions 1 to 26 (MASSAVIKLACAVLLCIVVAAPYAEA) are cleaved as a signal peptide. Cystine bridges form between cysteine 30–cysteine 76, cysteine 40–cysteine 53, cysteine 54–cysteine 99, and cysteine 74–cysteine 113.

It belongs to the plant LTP family.

Its function is as follows. Plant non-specific lipid-transfer proteins transfer phospholipids as well as galactolipids across membranes. May play a role in wax or cutin deposition in the cell walls of expanding epidermal cells and certain secretory tissues. This is Non-specific lipid-transfer protein from Spinacia oleracea (Spinach).